The chain runs to 215 residues: Peptide methionine sulfoxide reductase MsrA (215 aa).

C58 is an active-site residue.

The protein belongs to the MsrA Met sulfoxide reductase family.

It catalyses the reaction L-methionyl-[protein] + [thioredoxin]-disulfide + H2O = L-methionyl-(S)-S-oxide-[protein] + [thioredoxin]-dithiol. It carries out the reaction [thioredoxin]-disulfide + L-methionine + H2O = L-methionine (S)-S-oxide + [thioredoxin]-dithiol. In terms of biological role, has an important function as a repair enzyme for proteins that have been inactivated by oxidation. Catalyzes the reversible oxidation-reduction of methionine sulfoxide in proteins to methionine. In Pseudomonas aeruginosa (strain UCBPP-PA14), this protein is Peptide methionine sulfoxide reductase MsrA.